The sequence spans 62 residues: Sperm protamine P1 (62 aa).

The interval 1 to 62 (MARYRRHSRS…RYSRRGRRRY (62 aa)) is disordered.

The protein belongs to the protamine P1 family. As to expression, testis.

The protein resides in the nucleus. It is found in the chromosome. Functionally, protamines substitute for histones in the chromatin of sperm during the haploid phase of spermatogenesis. They compact sperm DNA into a highly condensed, stable and inactive complex. The sequence is that of Sperm protamine P1 (PRM1) from Neophascogale lorentzii (Long-clawed marsupial mouse).